The primary structure comprises 402 residues: N-acetyllactosaminide beta-1,6-N-acetylglucosaminyl-transferase (402 aa).

The Cytoplasmic portion of the chain corresponds to 1 to 7 (MMGSWKH). Residues 8-23 (CLFSASLISALIFVFV) traverse the membrane as a helical; Signal-anchor for type II membrane protein segment. The Lumenal portion of the chain corresponds to 24 to 400 (YNTELWENKR…QSETAIQPSW (377 aa)). Asparagine 41 carries an N-linked (GlcNAc...) asparagine glycan.

Belongs to the glycosyltransferase 14 family. In terms of tissue distribution, expressed in lens epithelium cells. As to expression, expressed in reticulocytes.

The protein localises to the golgi apparatus membrane. It carries out the reaction a beta-D-Gal-(1-&gt;4)-beta-D-GlcNAc-(1-&gt;3)-beta-D-Gal-(1-&gt;4)-beta-D-GlcNAc derivative + UDP-N-acetyl-alpha-D-glucosamine = a beta-D-Gal-(1-&gt;4)-beta-D-GlcNAc-(1-&gt;3)-[beta-D-GlcNAc-(1-&gt;6)]-beta-D-Gal-(1-&gt;4)-N-acetyl-beta-D-glucosaminyl derivative + UDP + H(+). Its pathway is protein modification; protein glycosylation. Functionally, branching enzyme that converts linear into branched poly-N-acetyllactosaminoglycans. Introduces the blood group I antigen during embryonic development. It is closely associated with the development and maturation of erythroid cells. In terms of biological role, determines the expression of the blood group I antigen in erythrocytes. This Homo sapiens (Human) protein is N-acetyllactosaminide beta-1,6-N-acetylglucosaminyl-transferase (GCNT2).